A 295-amino-acid chain; its full sequence is GTPase Era (295 aa).

The region spanning 5-172 is the Era-type G domain; the sequence is YCGYAAIIGR…EQAVHQLMPE (168 aa). The G1 stretch occupies residues 13–20; it reads GRPNVGKS. 13-20 is a GTP binding site; the sequence is GRPNVGKS. A G2 region spans residues 39–43; the sequence is QTTRY. Positions 60–63 are G3; sequence DTPG. GTP contacts are provided by residues 60 to 64 and 121 to 124; these read DTPGL and NKVD. The interval 121–124 is G4; sequence NKVD. Positions 151-153 are G5; the sequence is LSA. Positions 203–279 constitute a KH type-2 domain; the sequence is LGQEIPYSLA…FLQLWVKVKS (77 aa).

The protein belongs to the TRAFAC class TrmE-Era-EngA-EngB-Septin-like GTPase superfamily. Era GTPase family. In terms of assembly, monomer.

It is found in the cytoplasm. The protein resides in the cell inner membrane. In terms of biological role, an essential GTPase that binds both GDP and GTP, with rapid nucleotide exchange. Plays a role in 16S rRNA processing and 30S ribosomal subunit biogenesis and possibly also in cell cycle regulation and energy metabolism. This Coxiella burnetii (strain RSA 331 / Henzerling II) protein is GTPase Era.